A 179-amino-acid chain; its full sequence is Large ribosomal subunit protein uL5 (179 aa).

The protein belongs to the universal ribosomal protein uL5 family. In terms of assembly, part of the 50S ribosomal subunit; part of the 5S rRNA/L5/L18/L25 subcomplex. Contacts the 5S rRNA and the P site tRNA. Forms a bridge to the 30S subunit in the 70S ribosome.

This is one of the proteins that bind and probably mediate the attachment of the 5S RNA into the large ribosomal subunit, where it forms part of the central protuberance. In the 70S ribosome it contacts protein S13 of the 30S subunit (bridge B1b), connecting the 2 subunits; this bridge is implicated in subunit movement. Contacts the P site tRNA; the 5S rRNA and some of its associated proteins might help stabilize positioning of ribosome-bound tRNAs. In Syntrophus aciditrophicus (strain SB), this protein is Large ribosomal subunit protein uL5.